The chain runs to 125 residues: Succinate dehydrogenase cytochrome b556 subunit (125 aa).

Residues Met-1–Leu-22 lie on the Cytoplasmic side of the membrane. The helical transmembrane segment at Ser-23 to Thr-48 threads the bilayer. Over Ala-49–Gly-65 the chain is Periplasmic. A helical membrane pass occupies residues Trp-66 to Ile-86. Residue His-81 participates in heme binding. The Cytoplasmic segment spans residues Arg-87–Ile-104. A helical membrane pass occupies residues Ser-105–Trp-125.

The protein belongs to the cytochrome b560 family. Part of an enzyme complex containing four subunits: a flavoprotein, an iron-sulfur protein, plus two membrane-anchoring proteins, SdhC and SdhD. The complex can form homotrimers. It depends on heme as a cofactor.

It localises to the cell inner membrane. The protein operates within carbohydrate metabolism; tricarboxylic acid cycle. Membrane-anchoring subunit of succinate dehydrogenase (SDH). The sequence is that of Succinate dehydrogenase cytochrome b556 subunit (sdhC) from Coxiella burnetii (strain RSA 493 / Nine Mile phase I).